Consider the following 445-residue polypeptide: GTPase Der (445 aa).

EngA-type G domains lie at 3-166 and 180-353; these read PVIA…AERV and IRIG…ESCY. Residues 9-16, 56-60, 118-121, 186-193, 233-237, and 298-301 contribute to the GTP site; these read GRPNVGKS, DTGGI, NKTD, DTAGI, and NKWD. The KH-like domain occupies 354–438; that stretch reads AKWTTNRLTR…PIIFEFKSAE (85 aa).

This sequence belongs to the TRAFAC class TrmE-Era-EngA-EngB-Septin-like GTPase superfamily. EngA (Der) GTPase family. In terms of assembly, associates with the 50S ribosomal subunit.

In terms of biological role, GTPase that plays an essential role in the late steps of ribosome biogenesis. This Marinomonas sp. (strain MWYL1) protein is GTPase Der.